Consider the following 156-residue polypeptide: MRLRLICVGQKMPDWVSAGYNDYARRMPPELPLELTEIPMAHRGKNPDISRLMQRESDAILSAAGTRDRVVALEVGGRPWSTEKLASQLENWQQDGRDVAFLVGGPDGLADACRQRADQQWSLSPLTLPHPLVRILLAEQLYRAWTITRNHPYHRA.

S-adenosyl-L-methionine-binding positions include Leu73, Gly104, and 123–128; that span reads LSPLTL.

The protein belongs to the RNA methyltransferase RlmH family. Homodimer.

Its subcellular location is the cytoplasm. It catalyses the reaction pseudouridine(1915) in 23S rRNA + S-adenosyl-L-methionine = N(3)-methylpseudouridine(1915) in 23S rRNA + S-adenosyl-L-homocysteine + H(+). Specifically methylates the pseudouridine at position 1915 (m3Psi1915) in 23S rRNA. In Marinobacter nauticus (strain ATCC 700491 / DSM 11845 / VT8) (Marinobacter aquaeolei), this protein is Ribosomal RNA large subunit methyltransferase H.